We begin with the raw amino-acid sequence, 139 residues long: GSK3B-interacting protein (139 aa).

Residues 1-22 (METDCNPMELSSMSGFEEGSEL) are disordered. The interval 41–45 (VNDVL) is required for PRKAR2A interaction; contributes to a protective effect against H(2)O(2)-induced apoptosis. The interaction with GSK3B and acts as a GSK3B inhibitor stretch occupies residues 115–139 (SPAYREAFGNALLQRLEALKRDGQS).

This sequence belongs to the GSKIP family. Forms a complex composed of PRKAR2A or PRKAR2B, GSK3B and GSKIP through GSKIP interaction; facilitates PKA-induced phosphorylation of GSK3B leading to GSK3B inactivation; recruits DNM1L through GSK3B for PKA-mediated phosphorylation of DNM1L; promotes beta-catenin degradation through GSK3B-induced phosphorylation of beta-catenin; stabilizes beta-catenin and enhances Wnt-induced signaling through PKA-induced phosphorylation of beta-catenin. Interacts with GSK3B; induces GSK3B-mediated phosphorylation of GSKIP and inhibits GSK3B kinase activity. Phosphorylated by GSK3B. As to expression, detected in heart, brain, placenta, liver, skeletal muscle, kidney, testis, lung and pancreas.

The protein localises to the cytoplasm. It localises to the nucleus. Its function is as follows. A-kinase anchoring protein for GSK3B and PKA that regulates or facilitates their kinase activity towards their targets. The ternary complex enhances Wnt-induced signaling by facilitating the GSK3B- and PKA-induced phosphorylation of beta-catenin leading to beta-catenin degradation and stabilization respectively. Upon cAMP activation, the ternary complex contributes to neuroprotection against oxidative stress-induced apoptosis by facilitating the PKA-induced phosphorylation of DML1 and PKA-induced inactivation of GSK3B. During neurite outgrowth promotes neuron proliferation; while increases beta-catenin-induced transcriptional activity through GSK3B kinase activity inhibition, reduces N-cadherin level to promote cell cycle progression. The sequence is that of GSK3B-interacting protein from Homo sapiens (Human).